We begin with the raw amino-acid sequence, 1067 residues long: MDMTKQIVDFEIKSELIGEIDQFEASDYTMAPPEEPKMVEESPQLGHLEDQNRKYSPEREVEPTLQDPSEVVDQMQKDTESVGEVKSPEKDVETELVKSKASPMNDQALTPPPRPLTSSEVVGLRDPEHTELRMCLEAKKSRSLPVSPQPQPNLKLAGSALFEFGQRSSPVETKIKTNPETKPPRRKIVPPSGEGQQFCLRWNNYQSNLTNVFDELLQSESFVDVTLSCEGHSIKAHKMVLSACSPYFQALFYDNPCQHPIIIMRDVSWSDLKALVEFMYKGEINVCQDQINPLLKVAETLKIRGLAEVSAGRGEGGASALPMSAFDDEDEEEELASATAILQQDGDADPDEEMKAKRPRLLPEGVLDLNQRQRKRSRDGSYATPSPSLQGGESEISERGSSGTPGQSQSQPLAMTTSTIVRNPFASPNPQTLEGRNSAMNAVANQRKSPAPTATGHSNGNSGAAMHSPPGGVAVQSALPPHMAAIVPPPPSAMHHHAQQLAAQHQLAHSHAMASALAAAAAGAGAAGAGGAGSGSGSGASAPTGGTGVAGSGAGAAVGSHHDDMEIKPEIAEMIREEERAKMIESGGHGGWMGAAAAATGAASVAADSYQYQLQSMWQKCWNTNQQNLVQQLRFRERGPLKSWRPEAMAEAIFSVLKEGLSLSQAARKFDIPYPTFVLYANRVHNMLGPSLDGGADPRPKARGRPQRILLGMWPEELIRSVIKAVVFRDYREIKEDMSAHQYANGQGHGTYIGGGTTTNGYHSAAAAKLAAQNAALAPPDAGSPLSSMTETLRRQILSQQQQHQQHHQQQAHHQQQPSHHQQQSPHAQSMNMYKSPAYLQRSEIEDQVSAAAAVAAAAAKHQQQQGERRGSENLPDLSALGLMGLPGLNVMPSRGSGGGSGGAAPNSAASYARELSRERERDRERERERELSRQYGSQSRGSSSGSGSAKSLTASQRPGAASPYSAAHYAKHQASAYNKRFLESLPAGIDLEAFANGLLQKSVNKSPRFEDFFPGPGQDMSELFANPDASAAAAAAAYAPPGAIRESPLMKIKLEQQHATELPHED.

The disordered stretch occupies residues 30 to 121; sequence MAPPEEPKMV…PPRPLTSSEV (92 aa). 2 stretches are compositionally biased toward basic and acidic residues: residues 47-62 and 86-98; these read HLED…REVE and KSPE…ELVK. Y55 is modified (phosphotyrosine). A phosphoserine mark is found at S56, S87, and S147. One can recognise a BTB domain in the interval 223 to 288; that stretch reads VDVTLSCEGH…MYKGEINVCQ (66 aa). Disordered regions lie at residues 312–412, 444–505, and 525–563; these read GRGE…QSQP, ANQR…AAQH, and GAAG…SHHD. Positions 326–335 are enriched in acidic residues; that stretch reads FDDEDEEEEL. Residue S377 is modified to Phosphoserine. Phosphothreonine is present on T384. Residues 391-412 show a composition bias toward low complexity; sequence GGESEISERGSSGTPGQSQSQP. 2 stretches are compositionally biased toward gly residues: residues 525–538 and 545–556; these read GAAG…GSGS and GGTGVAGSGAGA. An HTH psq-type domain is found at 635 to 687; the sequence is FRERGPLKSWRPEAMAEAIFSVLKEGLSLSQAARKFDIPYPTFVLYANRVHNM. The segment at residues 645–690 is a DNA-binding region (H-T-H motif); it reads RPEAMAEAIFSVLKEGLSLSQAARKFDIPYPTFVLYANRVHNMLGP. The segment at residues 697 to 708 is a DNA-binding region (a.T hook); the sequence is DPRPKARGRPQR. Disordered stretches follow at residues 796–829, 860–879, and 891–967; these read QILS…PHAQ, AKHQ…PDLS, and VMPS…PYSA. The span at 812–829 shows a compositional bias: low complexity; that stretch reads AHHQQQPSHHQQQSPHAQ. The span at 904 to 914 shows a compositional bias: low complexity; that stretch reads AAPNSAASYAR. Over residues 915–933 the composition is skewed to basic and acidic residues; that stretch reads ELSRERERDRERERERELS. Over residues 934 to 949 the composition is skewed to low complexity; that stretch reads RQYGSQSRGSSSGSGS.

Leg imaginal disk at the central region of the tarsus and in eye antenna disk at the basal cylinder.

It localises to the nucleus. Probably acts as a transcriptional regulator. Required for the specification of the tarsal segment. Also involved in antenna development. The protein is Protein bric-a-brac 2 (bab2) of Drosophila melanogaster (Fruit fly).